We begin with the raw amino-acid sequence, 170 residues long: Thialysine N-epsilon-acetyltransferase (170 aa).

An N-acetyltransferase domain is found at 4 to 166; it reads TRIREARESD…FRFEGEAMRE (163 aa). 27–28 provides a ligand contact to substrate; that stretch reads FE. Lys29 bears the N6-acetyllysine mark. Glu92 is a substrate binding site. Acetyl-CoA contacts are provided by residues 94 to 96, 102 to 107, 133 to 135, and Tyr140; these read IYV, GQGIGT, and NKK. Tyr140 functions as the Proton donor in the catalytic mechanism. Residue Glu152 coordinates substrate.

The protein belongs to the acetyltransferase family. In terms of assembly, homodimer.

It localises to the cytoplasm. The catalysed reaction is S-(2-aminoethyl)-L-cysteine + acetyl-CoA = S-(2-acetamidoethyl)-L-cysteine + CoA + H(+). The enzyme catalyses an alkane-alpha,omega-diamine + acetyl-CoA = an N-acetylalkane-alpha,omega-diamine + CoA + H(+). Its function is as follows. Catalyzes the N-acetylation of the amino acid thialysine (S-(2-aminoethyl)-L-cysteine), a L-lysine analog with the 4-methylene group substituted with a sulfur. May also catalyze acetylation of polyamines, such as norspermidine, spermidine or spermine. However, ability to acetylate polyamines is weak, suggesting that it does not act as a diamine acetyltransferase in vivo. The polypeptide is Thialysine N-epsilon-acetyltransferase (Mus musculus (Mouse)).